Reading from the N-terminus, the 516-residue chain is GMP synthase [glutamine-hydrolyzing] (516 aa).

The 191-residue stretch at 8–198 (KILILDFGSQ…VVNICGCDTL (191 aa)) folds into the Glutamine amidotransferase type-1 domain. Cys84 functions as the Nucleophile in the catalytic mechanism. Catalysis depends on residues His172 and Glu174. The GMPS ATP-PPase domain maps to 199–391 (WNIENIIEND…LGLPYNMLYR (193 aa)). 226-232 (SGGVDSS) contacts ATP.

As to quaternary structure, homodimer.

The catalysed reaction is XMP + L-glutamine + ATP + H2O = GMP + L-glutamate + AMP + diphosphate + 2 H(+). The protein operates within purine metabolism; GMP biosynthesis; GMP from XMP (L-Gln route): step 1/1. Functionally, catalyzes the synthesis of GMP from XMP. The protein is GMP synthase [glutamine-hydrolyzing] of Francisella tularensis subsp. holarctica (strain FTNF002-00 / FTA).